The following is a 405-amino-acid chain: ATP phosphoribosyltransferase regulatory subunit (405 aa).

The protein belongs to the class-II aminoacyl-tRNA synthetase family. HisZ subfamily. Heteromultimer composed of HisG and HisZ subunits.

The protein localises to the cytoplasm. It functions in the pathway amino-acid biosynthesis; L-histidine biosynthesis; L-histidine from 5-phospho-alpha-D-ribose 1-diphosphate: step 1/9. In terms of biological role, required for the first step of histidine biosynthesis. May allow the feedback regulation of ATP phosphoribosyltransferase activity by histidine. The chain is ATP phosphoribosyltransferase regulatory subunit from Oceanobacillus iheyensis (strain DSM 14371 / CIP 107618 / JCM 11309 / KCTC 3954 / HTE831).